The following is a 375-amino-acid chain: MFSVIKNDKHFNARVGFLNLPHGRVDIPCFMPVGTLGAMKGLKHAVLEKLECNLMLANTYHLYLRLGIKTVEKYVGLHNFTTWNKNFLTDSGGFRVFSFSDLRKIDLKGVHFKFHIDGSYHYFTSEGIFAMQEIFGSDIIMPLDICSSYGIDYNEANLYTNITTNWASSTFKSSKNRKEGYNGLLFLITQGNFFKDLRKRSINDILELDSPGIAIGGISVGEPREKYLEILEYSFLLIPKEKPRYVMGIGTPHYILNAIYYGIDIFDCFNPARITRHGSLLTDNGIMCIGRKEYKDDTSKVEKNCICTLCKRYSRGYLRHLIKSKELFGIVLASEHNIHYMFRLISKIRAAILNDDFLNFRTSYLKKYEEENFDE.

Asp-90 (proton acceptor) is an active-site residue. Substrate contacts are provided by residues 90 to 94 (DSGGF), Asp-144, Gln-190, and Gly-217. Positions 248 to 254 (GIGTPHY) are RNA binding. Catalysis depends on Asp-267, which acts as the Nucleophile. The segment at 272 to 276 (ARITR) is RNA binding; important for wobble base 34 recognition. Residues Cys-305, Cys-307, Cys-310, and His-336 each coordinate Zn(2+).

This sequence belongs to the queuine tRNA-ribosyltransferase family. Homodimer. Within each dimer, one monomer is responsible for RNA recognition and catalysis, while the other monomer binds to the replacement base PreQ1. Requires Zn(2+) as cofactor.

The catalysed reaction is 7-aminomethyl-7-carbaguanine + guanosine(34) in tRNA = 7-aminomethyl-7-carbaguanosine(34) in tRNA + guanine. Its pathway is tRNA modification; tRNA-queuosine biosynthesis. In terms of biological role, catalyzes the base-exchange of a guanine (G) residue with the queuine precursor 7-aminomethyl-7-deazaguanine (PreQ1) at position 34 (anticodon wobble position) in tRNAs with GU(N) anticodons (tRNA-Asp, -Asn, -His and -Tyr). Catalysis occurs through a double-displacement mechanism. The nucleophile active site attacks the C1' of nucleotide 34 to detach the guanine base from the RNA, forming a covalent enzyme-RNA intermediate. The proton acceptor active site deprotonates the incoming PreQ1, allowing a nucleophilic attack on the C1' of the ribose to form the product. After dissociation, two additional enzymatic reactions on the tRNA convert PreQ1 to queuine (Q), resulting in the hypermodified nucleoside queuosine (7-(((4,5-cis-dihydroxy-2-cyclopenten-1-yl)amino)methyl)-7-deazaguanosine). The sequence is that of Queuine tRNA-ribosyltransferase from Borreliella burgdorferi (strain ZS7) (Borrelia burgdorferi).